Here is a 122-residue protein sequence, read N- to C-terminus: UPF0102 protein TTE1452 (122 aa).

It belongs to the UPF0102 family.

The protein is UPF0102 protein TTE1452 of Caldanaerobacter subterraneus subsp. tengcongensis (strain DSM 15242 / JCM 11007 / NBRC 100824 / MB4) (Thermoanaerobacter tengcongensis).